Here is a 345-residue protein sequence, read N- to C-terminus: Methylthioribose-1-phosphate isomerase (345 aa).

Residues 44-46 (RGA), R86, and Q194 each bind substrate. D235 functions as the Proton donor in the catalytic mechanism. 245 to 246 (NK) contributes to the substrate binding site.

Belongs to the eIF-2B alpha/beta/delta subunits family. MtnA subfamily.

The catalysed reaction is 5-(methylsulfanyl)-alpha-D-ribose 1-phosphate = 5-(methylsulfanyl)-D-ribulose 1-phosphate. It functions in the pathway amino-acid biosynthesis; L-methionine biosynthesis via salvage pathway; L-methionine from S-methyl-5-thio-alpha-D-ribose 1-phosphate: step 1/6. In terms of biological role, catalyzes the interconversion of methylthioribose-1-phosphate (MTR-1-P) into methylthioribulose-1-phosphate (MTRu-1-P). This is Methylthioribose-1-phosphate isomerase from Desulfitobacterium hafniense (strain DSM 10664 / DCB-2).